The following is a 2448-amino-acid chain: Non-reducing polyketide synthase mapC (2448 aa).

Positions 14-226 are N-terminal acylcarrier protein transacylase domain (SAT); it reads VLFGPQCPDI…HHEAHREGIQ (213 aa). The disordered stretch occupies residues 330 to 350; the sequence is GFSNESPQPSTASLSNSVQTF. The Ketosynthase family 3 (KS3) domain occupies 359–775; sequence ASPIAITGMA…GSNAALIVKE (417 aa). Residues Cys524, His659, and His698 each act as for beta-ketoacyl synthase activity in the active site. Positions 885 to 1188 are malonyl-CoA:ACP transacylase (MAT) domain; that stretch reads LCFGGQNGLT…HKIDLGGSSG (304 aa). The active-site For acyl/malonyl transferase activity is the Ser972. An N-terminal hotdog fold region spans residues 1256-1388; that stretch reads GQEAGLLCQL…GTVCLHQERS (133 aa). Positions 1256–1565 constitute a PKS/mFAS DH domain; the sequence is GQEAGLLCQL…FTSVSIRSLT (310 aa). A product template (PT) domain region spans residues 1261 to 1564; the sequence is LLCQLSESPD…RFTSVSIRSL (304 aa). His1290 acts as the Proton acceptor; for dehydratase activity in catalysis. The tract at residues 1414 to 1565 is C-terminal hotdog fold; the sequence is ASNGLKGSTV…FTSVSIRSLT (152 aa). Asp1471 (proton donor; for dehydratase activity) is an active-site residue. The 75-residue stretch at 1610–1684 folds into the Carrier domain; it reads AKDLATVQEM…GLVEHIFPGH (75 aa). At Ser1644 the chain carries O-(pantetheine 4'-phosphoryl)serine. Residues 1841–2076 form a methyltransferase (CMeT) domain region; it reads PYALEHDLLQ…GFEWVDWTNN (236 aa). Residues Ser2227, Asp2385, and His2417 each act as for thioesterase activity in the active site.

Its subcellular location is the cytoplasm. The protein resides in the cytosol. The enzyme catalyses 3 malonyl-CoA + acetyl-CoA + S-adenosyl-L-methionine + H(+) = 5-methylorsellinate + S-adenosyl-L-homocysteine + 3 CO2 + 4 CoA. It functions in the pathway secondary metabolite biosynthesis; terpenoid biosynthesis. Its function is as follows. Non-reducing polyketide synthase; part of the gene cluster that mediates the biosynthesis of mycophenolic acid (MPA), the first isolated antibiotic natural product in the world obtained from a culture of Penicillium brevicompactum in 1893. MpaC catalyzes the synthesis of 5-methylorsellinic acid (5MOA) via the condensation of 1 acetyl-CoA starter unit with 3 malonyl-CoA units and one methylation step. The first step of the pathway is the synthesis of 5-methylorsellinic acid (5MOA) by the cytosolic polyketide synthase mpaC. 5MOA is then converted to the phthalide compound 5,7-dihydroxy-4,6-dimethylphthalide (DHMP) by the endoplasmic reticulum-bound cytochrome P450 monooxygenase mpaDE. MpaDE first catalyzes hydroxylation of 5-MOA to 4,6-dihydroxy-2-(hydroxymethyl)-3-methylbenzoic acid (DHMB). MpaDE then acts as a lactone synthase that catalyzes the ring closure to convert DHMB into DHMP. The next step is the prenylation of DHMP by the Golgi apparatus-associated prenyltransferase mpaA to yield farnesyl-DHMP (FDHMP). The ER-bound oxygenase mpaB then mediates the oxidative cleavage the C19-C20 double bond in FDHMP to yield FDHMP-3C via a mycophenolic aldehyde intermediate. The O-methyltransferase mpaG catalyzes the methylation of FDHMP-3C to yield MFDHMP-3C. After the cytosolic methylation of FDHMP-3C, MFDHMP-3C enters into peroxisomes probably via free diffusion due to its low molecular weight. Upon a peroxisomal CoA ligation reaction, catalyzed by a beta-oxidation component enzyme acyl-CoA ligase ACL891, MFDHMP-3C-CoA would then be restricted to peroxisomes for the following beta-oxidation pathway steps. The peroxisomal beta-oxidation machinery than converts MFDHMP-3C-CoA into MPA_CoA, via a beta-oxidation chain-shortening process. Finally mpaH acts as a peroxisomal acyl-CoA hydrolase with high substrate specificity toward MPA-CoA to release the final product MPA. The polypeptide is Non-reducing polyketide synthase mapC (Penicillium brevicompactum).